Consider the following 80-residue polypeptide: MSCCGGNCGCGSGCKCGNGCGGCKMYPDLGFSGESTTTETFVFGVAPAMKNQYEASGEGVAENDRCKCGSDCKCDPCTCK.

Belongs to the metallothionein superfamily. Type 15 family.

Its function is as follows. Metallothioneins have a high content of cysteine residues that bind various heavy metals. The chain is Metallothionein-like protein BIF98 from Brassica rapa subsp. pekinensis (Chinese cabbage).